Consider the following 306-residue polypeptide: Proteasome subunit beta (306 aa).

Residues 1–67 constitute a propeptide, removed in mature form; by autocatalysis; that stretch reads MTWPNRDQPA…GLPTDAVPHG (67 aa). Thr68 acts as the Nucleophile in catalysis.

This sequence belongs to the peptidase T1B family. As to quaternary structure, the 20S proteasome core is composed of 14 alpha and 14 beta subunits that assemble into four stacked heptameric rings, resulting in a barrel-shaped structure. The two inner rings, each composed of seven catalytic beta subunits, are sandwiched by two outer rings, each composed of seven alpha subunits. The catalytic chamber with the active sites is on the inside of the barrel. Has a gated structure, the ends of the cylinder being occluded by the N-termini of the alpha-subunits. Is capped by the proteasome-associated ATPase, ARC.

The protein resides in the cytoplasm. The enzyme catalyses Cleavage of peptide bonds with very broad specificity.. Its pathway is protein degradation; proteasomal Pup-dependent pathway. Its activity is regulated as follows. The formation of the proteasomal ATPase ARC-20S proteasome complex, likely via the docking of the C-termini of ARC into the intersubunit pockets in the alpha-rings, may trigger opening of the gate for substrate entry. Interconversion between the open-gate and close-gate conformations leads to a dynamic regulation of the 20S proteasome proteolysis activity. Component of the proteasome core, a large protease complex with broad specificity involved in protein degradation. This Mycolicibacterium vanbaalenii (strain DSM 7251 / JCM 13017 / BCRC 16820 / KCTC 9966 / NRRL B-24157 / PYR-1) (Mycobacterium vanbaalenii) protein is Proteasome subunit beta.